Reading from the N-terminus, the 280-residue chain is Thymidylate synthase (280 aa).

Arg21 is a binding site for dUMP. His51 contributes to the (6R)-5,10-methylene-5,6,7,8-tetrahydrofolate binding site. 142 to 143 (RR) lines the dUMP pocket. Cys162 functions as the Nucleophile in the catalytic mechanism. Residues 182–185 (RSAD), Asn193, and 223–225 (HLY) contribute to the dUMP site. Asp185 lines the (6R)-5,10-methylene-5,6,7,8-tetrahydrofolate pocket. Residue Ala279 coordinates (6R)-5,10-methylene-5,6,7,8-tetrahydrofolate.

The protein belongs to the thymidylate synthase family. Bacterial-type ThyA subfamily. In terms of assembly, homodimer.

It localises to the cytoplasm. It catalyses the reaction dUMP + (6R)-5,10-methylene-5,6,7,8-tetrahydrofolate = 7,8-dihydrofolate + dTMP. It participates in pyrimidine metabolism; dTTP biosynthesis. Catalyzes the reductive methylation of 2'-deoxyuridine-5'-monophosphate (dUMP) to 2'-deoxythymidine-5'-monophosphate (dTMP) while utilizing 5,10-methylenetetrahydrofolate (mTHF) as the methyl donor and reductant in the reaction, yielding dihydrofolate (DHF) as a by-product. This enzymatic reaction provides an intracellular de novo source of dTMP, an essential precursor for DNA biosynthesis. The protein is Thymidylate synthase of Acinetobacter baumannii (strain AB307-0294).